A 400-amino-acid polypeptide reads, in one-letter code: Nicotinate phosphoribosyltransferase (400 aa).

A Phosphohistidine; by autocatalysis modification is found at H220.

Belongs to the NAPRTase family. Transiently phosphorylated on a His residue during the reaction cycle. Phosphorylation strongly increases the affinity for substrates and increases the rate of nicotinate D-ribonucleotide production. Dephosphorylation regenerates the low-affinity form of the enzyme, leading to product release.

The enzyme catalyses nicotinate + 5-phospho-alpha-D-ribose 1-diphosphate + ATP + H2O = nicotinate beta-D-ribonucleotide + ADP + phosphate + diphosphate. Its pathway is cofactor biosynthesis; NAD(+) biosynthesis; nicotinate D-ribonucleotide from nicotinate: step 1/1. In terms of biological role, catalyzes the synthesis of beta-nicotinate D-ribonucleotide from nicotinate and 5-phospho-D-ribose 1-phosphate at the expense of ATP. This chain is Nicotinate phosphoribosyltransferase, found in Enterobacter sp. (strain 638).